The sequence spans 165 residues: Anterior gradient protein 3 (165 aa).

A signal peptide spans 1 to 20; it reads MLHSALALCLLLITVSSNLA. A Prevents secretion from ER motif is present at residues 162 to 165; sequence QSEL.

Belongs to the AGR family. As to quaternary structure, interacts with LYPD3 and DAG1 (alphaDAG1). In terms of tissue distribution, expressed in the ciliated cells of the airway epithelium. Not detected in the mucous cells.

The protein localises to the endoplasmic reticulum. It localises to the cytoplasm. Required for calcium-mediated regulation of ciliary beat frequency and mucociliary clearance in the airway. Might be involved in the regulation of intracellular calcium in tracheal epithelial cells. This is Anterior gradient protein 3 from Mus musculus (Mouse).